The following is a 98-amino-acid chain: MPRIVNPLDEMLFKEVLKEQQRIRVYIERARYGKLKTIIEGIDEKEFDLEDIAKKLKAKLACGGTVKKGRIELQGDHRDRIKKLLADLGFSEELIEVE.

The protein belongs to the SUI1 family.

The polypeptide is Protein translation factor SUI1 homolog (Thermococcus gammatolerans (strain DSM 15229 / JCM 11827 / EJ3)).